Consider the following 99-residue polypeptide: NADH-ubiquinone oxidoreductase chain 2 (99 aa).

2 consecutive transmembrane segments (helical) span residues 22-42 (FLTFIGILLSGITAFYYIQII) and 65-85 (VMISITTLLLILFFADNSIFI).

Belongs to the complex I subunit 2 family.

Its subcellular location is the mitochondrion inner membrane. The catalysed reaction is a ubiquinone + NADH + 5 H(+)(in) = a ubiquinol + NAD(+) + 4 H(+)(out). Functionally, core subunit of the mitochondrial membrane respiratory chain NADH dehydrogenase (Complex I) that is believed to belong to the minimal assembly required for catalysis. Complex I functions in the transfer of electrons from NADH to the respiratory chain. The immediate electron acceptor for the enzyme is believed to be ubiquinone. This is NADH-ubiquinone oxidoreductase chain 2 (ND2) from Cyanidium caldarium (Red alga).